A 459-amino-acid chain; its full sequence is Argininosuccinate lyase (459 aa).

Belongs to the lyase 1 family. Argininosuccinate lyase subfamily.

It is found in the cytoplasm. It catalyses the reaction 2-(N(omega)-L-arginino)succinate = fumarate + L-arginine. The protein operates within amino-acid biosynthesis; L-arginine biosynthesis; L-arginine from L-ornithine and carbamoyl phosphate: step 3/3. This is Argininosuccinate lyase from Prochlorococcus marinus (strain MIT 9301).